The primary structure comprises 960 residues: ATPase 4, plasma membrane-type (960 aa).

The Cytoplasmic portion of the chain corresponds to 1–69 (MTTTVEDNRE…EKKESKFLKF (69 aa)). The chain crosses the membrane as a helical span at residues 70–89 (LGFMWNPLSWVMEAAAIMAI). The Extracellular portion of the chain corresponds to 90–101 (ALANGGGKPPDW). Residues 102–122 (QDFVGIITLLVINSTISFIEE) form a helical membrane-spanning segment. At 123–251 (NNAGNAAAAL…GHFQQVLTAI (129 aa)) the chain is on the cytoplasmic side. The chain crosses the membrane as a helical span at residues 252–272 (GNFCICSIAVGMLIEIVVMYP). At 273 to 281 (IQHRAYRPG) the chain is on the extracellular side. Residues 282–299 (IDNLLVLLIGGIPIAMPT) form a helical membrane-spanning segment. Residues 300-651 (VLSVTMAIGS…TSRAIFQRMK (352 aa)) lie on the Cytoplasmic side of the membrane. Aspartate 337 serves as the catalytic 4-aspartylphosphate intermediate. Residues aspartate 596 and aspartate 600 each contribute to the Mg(2+) site. A helical transmembrane segment spans residues 652–673 (NYTIYAVSITIRIVLGFMLLAL). The Extracellular segment spans residues 674–678 (IWQFD). Residues 679–701 (FPPFMVLIIAILNDGTIMTISKD) traverse the membrane as a helical segment. Residues 702 to 717 (RVKPSPLPDSWKLSEI) are Cytoplasmic-facing. Residues 718 to 738 (FATGVVFGSYMAMMTVIFFWV) form a helical membrane-spanning segment. At 739–763 (SYKTDFFPRTFGVATLEKTAHDDFR) the chain is on the extracellular side. The helical transmembrane segment at 764 to 784 (KLASAIYLQVSIISQALIFVT) threads the bilayer. Over 785 to 796 (RSRSWSFVERPG) the chain is Cytoplasmic. Residues 797–817 (IFLMIAFILAQLVATLIAVYA) form a helical membrane-spanning segment. The Extracellular segment spans residues 818 to 825 (NWSFAAIE). Residues 826-846 (GIGWGWAGVIWLYNIIFYIPL) traverse the membrane as a helical segment. The Cytoplasmic segment spans residues 847 to 960 (DFIKFFIRYA…IETIQQAYTV (114 aa)). At threonine 893 the chain carries Phosphothreonine. Serine 942 is modified (phosphoserine). The segment at 958 to 960 (YTV) is interaction with 14-3-3 proteins. Threonine 959 bears the Phosphothreonine mark.

Belongs to the cation transport ATPase (P-type) (TC 3.A.3) family. Type IIIA subfamily. As to quaternary structure, binds to 14-3-3 proteins. The binding is induced by phosphorylation of Thr-959. Binding to 14-3-3 proteins activates the H(+)-ATPase. As to expression, expressed in guard cells and roots.

Its subcellular location is the cell membrane. The enzyme catalyses ATP + H2O + H(+)(in) = ADP + phosphate + 2 H(+)(out). In terms of biological role, the plasma membrane H(+) ATPase of plants and fungi generates a proton gradient that drives the active transport of nutrients by H(+)-symport. The resulting external acidification and/or internal alkinization may mediate growth responses. The protein is ATPase 4, plasma membrane-type (AHA4) of Arabidopsis thaliana (Mouse-ear cress).